A 1050-amino-acid chain; its full sequence is Mitotic checkpoint serine/threonine-protein kinase BUB1 beta (1050 aa).

Positions 62–226 (FEYEIRFYTG…FESSVPQRST (165 aa)) constitute a BUB1 N-terminal domain. A Nuclear localization signal motif is present at residues 111 to 118 (GEKRYYSD). The tract at residues 152-185 (AQFYISWAEEYEARENFRKADAIFQEGIQQKAEP) is necessary for interaction with KNL1. A D-box motif is present at residues 224–232 (RSTLAELKS). An N6-acetyllysine; by PCAF modification is found at Lys-250. The residue at position 367 (Ser-367) is a Phosphoserine. Positions 368 to 393 (TRKPGKEEGDPLQRVQSHQQASEEKK) are disordered. A Phosphoserine modification is found at Ser-435. Residues 456–480 (IQTTQQERTGDQQEETMPTKETTKL) are disordered. Phosphoserine is present on residues Ser-543, Ser-665, and Ser-670. Residue Ser-676 is modified to Phosphoserine; by PLK1. Ser-697 is modified (phosphoserine). One can recognise a Protein kinase domain in the interval 766–1050 (YCIKREYLIC…LTSPGALLFQ (285 aa)). 772-780 (YLICEDYKL) is an ATP binding site. Residue Thr-792 is modified to Phosphothreonine; by PLK1. ATP is bound at residue Lys-795. Asp-882 serves as the catalytic Proton acceptor. Thr-1008 carries the post-translational modification Phosphothreonine; by PLK1. Thr-1042 is subject to Phosphothreonine. Residue Ser-1043 is modified to Phosphoserine.

It belongs to the protein kinase superfamily. Ser/Thr protein kinase family. BUB1 subfamily. Interacts with CENPE. Interacts with PLK1. Part of a complex containing BUB3, CDC20 and BUB1B. Interacts with anaphase-promoting complex/cyclosome (APC/C). Interacts with KNL1. Interacts with KAT2B. Interacts with RIPK3. Interacts with the closed conformation form of MAD2L1. Proteolytically cleaved by caspase-3 in a cell cycle specific manner. The cleavage might be involved in the durability of the cell cycle delay. Caspase-3 cleavage is associated with abrogation of the mitotic checkpoint. The major site of cleavage is at Asp-610. Post-translationally, acetylation at Lys-250 regulates its degradation and timing in anaphase entry. In terms of processing, ubiquitinated. Degraded by the proteasome. Ubiquitinated by UBR5, promoting disassembly of the mitotic checkpoint complex from the APC/C complex. Sumoylated with SUMO2 and SUMO3. The sumoylation mediates the association with CENPE at the kinetochore. Post-translationally, autophosphorylated in vitro. Intramolecular autophosphorylation is stimulated by CENPE. Phosphorylated during mitosis and hyperphosphorylated in mitotically arrested cells. Phosphorylation at Ser-670 and Ser-1043 occurs at kinetochores upon mitotic entry with dephosphorylation at the onset of anaphase. In terms of tissue distribution, highly expressed in thymus followed by spleen. Preferentially expressed in tissues with a high mitotic index.

The protein resides in the cytoplasm. It is found in the nucleus. Its subcellular location is the chromosome. It localises to the centromere. The protein localises to the kinetochore. The protein resides in the cytoskeleton. It is found in the microtubule organizing center. Its subcellular location is the centrosome. It catalyses the reaction L-seryl-[protein] + ATP = O-phospho-L-seryl-[protein] + ADP + H(+). The catalysed reaction is L-threonyl-[protein] + ATP = O-phospho-L-threonyl-[protein] + ADP + H(+). Kinase activity stimulated by CENPE. In terms of biological role, essential component of the mitotic checkpoint. Required for normal mitosis progression. The mitotic checkpoint delays anaphase until all chromosomes are properly attached to the mitotic spindle. One of its checkpoint functions is to inhibit the activity of the anaphase-promoting complex/cyclosome (APC/C) by blocking the binding of CDC20 to APC/C, independently of its kinase activity. The other is to monitor kinetochore activities that depend on the kinetochore motor CENPE. Required for kinetochore localization of CENPE. Negatively regulates PLK1 activity in interphase cells and suppresses centrosome amplification. Also implicated in triggering apoptosis in polyploid cells that exit aberrantly from mitotic arrest. May play a role for tumor suppression. This Homo sapiens (Human) protein is Mitotic checkpoint serine/threonine-protein kinase BUB1 beta (BUB1B).